Reading from the N-terminus, the 145-residue chain is Basic phospholipase A2 BFPA (145 aa).

The first 27 residues, methionine 1–leucine 27, serve as a signal peptide directing secretion. Intrachain disulfides connect cysteine 38–cysteine 97, cysteine 52–cysteine 144, cysteine 54–cysteine 70, cysteine 69–cysteine 125, cysteine 76–cysteine 118, cysteine 86–cysteine 111, and cysteine 104–cysteine 116. Ca(2+)-binding residues include tyrosine 53, glycine 55, and glycine 57. Residue histidine 73 is part of the active site. Residue aspartate 74 participates in Ca(2+) binding. Residue aspartate 119 is part of the active site.

It belongs to the phospholipase A2 family. Group I subfamily. D49 sub-subfamily. As to quaternary structure, homodimer; disulfide-linked. Requires Ca(2+) as cofactor. Expressed by the venom gland.

The protein localises to the secreted. The catalysed reaction is a 1,2-diacyl-sn-glycero-3-phosphocholine + H2O = a 1-acyl-sn-glycero-3-phosphocholine + a fatty acid + H(+). Its function is as follows. Snake venom phospholipase A2 (PLA2) that inhibits blood coagulation and shows bactericidal activities against both Gram-negative and -positive bacteria (E.coli, MIC=0.4 uM and S.aureus, MIC=0.1 uM). PLA2 catalyzes the calcium-dependent hydrolysis of the 2-acyl groups in 3-sn-phosphoglycerides. The chain is Basic phospholipase A2 BFPA from Bungarus fasciatus (Banded krait).